The sequence spans 491 residues: Katanin p60 ATPase-containing subunit A1 (491 aa).

Residues 1–29 form an interaction with KATNB1 region; it reads MSLLMITENVKLAREYALLGNYDSAMVYY. Positions 1 to 75 are interaction with dynein and NDEL1; it reads MSLLMITENV…VKEIMKTLES (75 aa). The interaction with microtubules stretch occupies residues 1-185; the sequence is MSLLMITENV…EPEANKFDST (185 aa). Serine 42 carries the phosphoserine; by DYRK2 modification. The tract at residues 87–183 is disordered; sequence QHELPSSEGE…VTEPEANKFD (97 aa). Residues 145–169 are compositionally biased toward basic and acidic residues; it reads HSDRGKAVRSREKKEQSKGREEKNK. Residue 249–256 participates in ATP binding; it reads GPPGTGKT.

Belongs to the AAA ATPase family. Katanin p60 subunit A1 subfamily. Can homooligomerize into hexameric rings, which may be promoted by interaction with microtubules. Interacts with KATNB1, which may serve as a targeting subunit. Interacts with ASPM; the katanin complex formation KATNA1:KATNB1 is required for the association of ASPM. Interacts with dynein and NDEL1. Associates with the E3 ligase complex containing DYRK2, EDD/UBR5, DDB1 and DCAF1 proteins (EDVP complex). Interacts with KLHL42 (via the kelch domains). Interacts with CUL3; the interaction is enhanced by KLHL42. Interacts with KATNB1 and KATNBL1. In terms of processing, phosphorylation by DYRK2 triggers ubiquitination and subsequent degradation. Post-translationally, ubiquitinated by the BCR(KLHL42) E3 ubiquitin ligase complex, leading to its proteasomal degradation. Ubiquitinated by the EDVP E3 ligase complex and subsequently targeted for proteasomal degradation.

It is found in the cytoplasm. The protein resides in the midbody. The protein localises to the cytoskeleton. Its subcellular location is the microtubule organizing center. It localises to the centrosome. It is found in the spindle pole. The protein resides in the spindle. It carries out the reaction n ATP + n H2O + a microtubule = n ADP + n phosphate + (n+1) alpha/beta tubulin heterodimers.. ATPase activity is stimulated by microtubules, which promote homooligomerization. ATP-dependent microtubule severing is stimulated by interaction with KATNB1. In terms of biological role, catalytic subunit of a complex which severs microtubules in an ATP-dependent manner. Microtubule severing may promote rapid reorganization of cellular microtubule arrays and the release of microtubules from the centrosome following nucleation. Microtubule release from the mitotic spindle poles may allow depolymerization of the microtubule end proximal to the spindle pole, leading to poleward microtubule flux and poleward motion of chromosome. Microtubule release within the cell body of neurons may be required for their transport into neuronal processes by microtubule-dependent motor proteins. This transport is required for axonal growth. This Rattus norvegicus (Rat) protein is Katanin p60 ATPase-containing subunit A1 (Katna1).